A 274-amino-acid polypeptide reads, in one-letter code: Thiamine kinase (274 aa).

This sequence belongs to the thiamine kinase family.

It catalyses the reaction thiamine + ATP = thiamine phosphate + ADP + H(+). The protein operates within cofactor biosynthesis; thiamine diphosphate biosynthesis; thiamine phosphate from thiamine: step 1/1. Catalyzes the ATP-dependent phosphorylation of thiamine to thiamine phosphate. Is involved in thiamine salvage. This is Thiamine kinase from Salmonella paratyphi A (strain ATCC 9150 / SARB42).